We begin with the raw amino-acid sequence, 577 residues long: MFS-type transporter CPUR_05422 (577 aa).

The tract at residues M1–P49 is disordered. Basic and acidic residues predominate over residues D19–V34. Residues P38–P47 are compositionally biased toward pro residues. Helical transmembrane passes span S52 to V72, D93 to G113, V123 to P143, V157 to A177, G184 to F204, W212 to F232, I249 to L269, I285 to C305, F326 to W346, G359 to L379, I383 to L403, V416 to L436, M449 to G469, and V525 to W545. A disordered region spans residues P554 to T577.

The protein belongs to the major facilitator superfamily. TCR/Tet family.

Its subcellular location is the membrane. In terms of biological role, MFS-type transporter; part of the ergochrome gene cluster responsible for the typical purple-black color of the ergot sclerotia. The ergochrome gene cluster produces several ergot pigments including the yellow ergochrome secalonic acid and its derivatives, as well as the red anthraquinones endocrocin and clavorubin. This chain is MFS-type transporter CPUR_05422, found in Claviceps purpurea (strain 20.1) (Ergot fungus).